The chain runs to 217 residues: Non-structural protein NS3 (217 aa).

Belongs to the orbivirus NS3 family.

Functionally, may play a role in the release of virions from infected cells. The protein is Non-structural protein NS3 (Segment-10) of African horse sickness virus (AHSV).